We begin with the raw amino-acid sequence, 293 residues long: Probable flavonol synthase 6 (293 aa).

Residues 156–253 enclose the Fe2OG dioxygenase domain; sequence KAQYVMRINY…RMSWPILVEP (98 aa). 164–166 is a 2-oxoglutarate binding site; that stretch reads NYY. Fe cation is bound by residues histidine 178, aspartate 180, and histidine 234. 244 to 246 contributes to the 2-oxoglutarate binding site; it reads RMS.

It belongs to the iron/ascorbate-dependent oxidoreductase family. Fe(2+) is required as a cofactor.

The catalysed reaction is a (2R,3R)-dihydroflavonol + 2-oxoglutarate + O2 = a flavonol + succinate + CO2 + H2O. It participates in secondary metabolite biosynthesis; flavonoid biosynthesis. The polypeptide is Probable flavonol synthase 6 (FLS6) (Arabidopsis thaliana (Mouse-ear cress)).